A 491-amino-acid chain; its full sequence is Cobyric acid synthase (491 aa).

A GATase cobBQ-type domain is found at 250–439; sequence EVTIAVIRLP…LHGIFDNGAW (190 aa). Cysteine 331 (nucleophile) is an active-site residue. Histidine 431 is an active-site residue.

The protein belongs to the CobB/CobQ family. CobQ subfamily.

Its pathway is cofactor biosynthesis; adenosylcobalamin biosynthesis. Catalyzes amidations at positions B, D, E, and G on adenosylcobyrinic A,C-diamide. NH(2) groups are provided by glutamine, and one molecule of ATP is hydrogenolyzed for each amidation. In Synechococcus sp. (strain ATCC 27144 / PCC 6301 / SAUG 1402/1) (Anacystis nidulans), this protein is Cobyric acid synthase.